The primary structure comprises 235 residues: Phosphoribosylaminoimidazole-succinocarboxamide synthase (235 aa).

Belongs to the SAICAR synthetase family.

The catalysed reaction is 5-amino-1-(5-phospho-D-ribosyl)imidazole-4-carboxylate + L-aspartate + ATP = (2S)-2-[5-amino-1-(5-phospho-beta-D-ribosyl)imidazole-4-carboxamido]succinate + ADP + phosphate + 2 H(+). The protein operates within purine metabolism; IMP biosynthesis via de novo pathway; 5-amino-1-(5-phospho-D-ribosyl)imidazole-4-carboxamide from 5-amino-1-(5-phospho-D-ribosyl)imidazole-4-carboxylate: step 1/2. This chain is Phosphoribosylaminoimidazole-succinocarboxamide synthase, found in Streptococcus thermophilus (strain ATCC BAA-491 / LMD-9).